A 327-amino-acid polypeptide reads, in one-letter code: E3 ubiquitin ligase Rnf121 (327 aa).

5 helical membrane passes run 50–70 (MHAE…LLLV), 79–96 (SYNM…VYFT), 99–119 (LHWW…AYIT), 148–168 (ATGI…NLLF), and 173–193 (EDAM…GVLG). The segment at 226 to 276 (CAVCGQQIFVDVNEEGIIENTYRLSCNHVFHEFCIRGWCIVGKKQTCPYCK) adopts an RING-type; atypical zinc-finger fold.

Belongs to the RNF121 family.

Its subcellular location is the endoplasmic reticulum membrane. The catalysed reaction is S-ubiquitinyl-[E2 ubiquitin-conjugating enzyme]-L-cysteine + [acceptor protein]-L-lysine = [E2 ubiquitin-conjugating enzyme]-L-cysteine + N(6)-ubiquitinyl-[acceptor protein]-L-lysine.. The protein operates within protein modification; protein ubiquitination. Its function is as follows. E3 ubiquitin ligase which accepts ubiquitin and transfers it to substrates thereby promoting their degradation by the endoplasmic reticulum-associated degradation (ERAD) pathway which is a pathway involved in ubiquitin-dependent degradation of misfolded endoplasmic reticulum proteins. May regulate the unfolded protein response to reduce endoplasmic reticulum stress. The chain is E3 ubiquitin ligase Rnf121 (rnf121) from Xenopus laevis (African clawed frog).